We begin with the raw amino-acid sequence, 126 residues long: Arginine decarboxylase proenzyme (126 aa).

Serine 74 acts as the Schiff-base intermediate with substrate; via pyruvic acid in catalysis. Serine 74 is modified (pyruvic acid (Ser); by autocatalysis). Histidine 79 serves as the catalytic Proton acceptor; for processing activity. Cysteine 94 acts as the Proton donor; for catalytic activity in catalysis.

It belongs to the prokaryotic AdoMetDC family. Type 1 subfamily. Heterooctamer of four alpha and four beta chains arranged as a tetramer of alpha/beta heterodimers. Pyruvate serves as cofactor. Post-translationally, is synthesized initially as an inactive proenzyme. Formation of the active enzyme involves a self-maturation process in which the active site pyruvoyl group is generated from an internal serine residue via an autocatalytic post-translational modification. Two non-identical subunits are generated from the proenzyme in this reaction, and the pyruvate is formed at the N-terminus of the alpha chain, which is derived from the carboxyl end of the proenzyme. The post-translation cleavage follows an unusual pathway, termed non-hydrolytic serinolysis, in which the side chain hydroxyl group of the serine supplies its oxygen atom to form the C-terminus of the beta chain, while the remainder of the serine residue undergoes an oxidative deamination to produce ammonia and the pyruvoyl group blocking the N-terminus of the alpha chain.

It carries out the reaction L-arginine + H(+) = agmatine + CO2. It functions in the pathway amine and polyamine biosynthesis; agmatine biosynthesis; agmatine from L-arginine: step 1/1. In terms of biological role, specifically catalyzes the decarboxylation of L-arginine to agmatine. Has no S-adenosylmethionine decarboxylase (AdoMetDC) activity. The polypeptide is Arginine decarboxylase proenzyme (Pyrobaculum neutrophilum (strain DSM 2338 / JCM 9278 / NBRC 100436 / V24Sta) (Thermoproteus neutrophilus)).